The following is a 408-amino-acid chain: Acetate kinase (408 aa).

Position 7 (Asn-7) interacts with Mg(2+). ATP is bound at residue Lys-14. Substrate is bound at residue Arg-91. The active-site Proton donor/acceptor is Asp-148. ATP-binding positions include 208-212, 283-285, and 331-335; these read HLGNG, DFR, and GIGEN. Mg(2+) is bound at residue Glu-384.

Belongs to the acetokinase family. In terms of assembly, homodimer. The cofactor is Mg(2+). Requires Mn(2+) as cofactor.

Its subcellular location is the cytoplasm. It carries out the reaction acetate + ATP = acetyl phosphate + ADP. Its pathway is metabolic intermediate biosynthesis; acetyl-CoA biosynthesis; acetyl-CoA from acetate: step 1/2. Catalyzes the formation of acetyl phosphate from acetate and ATP. Can also catalyze the reverse reaction. In Methanosarcina mazei (Methanosarcina frisia), this protein is Acetate kinase.